Reading from the N-terminus, the 844-residue chain is Probable inorganic carbon transporter subunit DabA 1 (844 aa).

Positions 359, 361, 543, and 558 each coordinate Zn(2+).

It belongs to the inorganic carbon transporter (TC 9.A.2) DabA family. In terms of assembly, forms a complex with DabB. It depends on Zn(2+) as a cofactor.

Its subcellular location is the cell inner membrane. Part of an energy-coupled inorganic carbon pump. The protein is Probable inorganic carbon transporter subunit DabA 1 of Bradyrhizobium sp. (strain BTAi1 / ATCC BAA-1182).